A 264-amino-acid chain; its full sequence is Thymidylate synthase (264 aa).

R21 contributes to the dUMP binding site. Residue H51 coordinates (6R)-5,10-methylene-5,6,7,8-tetrahydrofolate. 126-127 (RR) contributes to the dUMP binding site. C146 serves as the catalytic Nucleophile. DUMP contacts are provided by residues 166–169 (RSAD), N177, and 207–209 (HLY). D169 serves as a coordination point for (6R)-5,10-methylene-5,6,7,8-tetrahydrofolate. Position 263 (A263) interacts with (6R)-5,10-methylene-5,6,7,8-tetrahydrofolate.

The protein belongs to the thymidylate synthase family. Bacterial-type ThyA subfamily. Homodimer.

The protein localises to the cytoplasm. It carries out the reaction dUMP + (6R)-5,10-methylene-5,6,7,8-tetrahydrofolate = 7,8-dihydrofolate + dTMP. It functions in the pathway pyrimidine metabolism; dTTP biosynthesis. In terms of biological role, catalyzes the reductive methylation of 2'-deoxyuridine-5'-monophosphate (dUMP) to 2'-deoxythymidine-5'-monophosphate (dTMP) while utilizing 5,10-methylenetetrahydrofolate (mTHF) as the methyl donor and reductant in the reaction, yielding dihydrofolate (DHF) as a by-product. This enzymatic reaction provides an intracellular de novo source of dTMP, an essential precursor for DNA biosynthesis. This is Thymidylate synthase from Bartonella henselae (strain ATCC 49882 / DSM 28221 / CCUG 30454 / Houston 1) (Rochalimaea henselae).